The primary structure comprises 87 residues: Antitoxin YefM (87 aa).

This sequence belongs to the phD/YefM antitoxin family. In terms of assembly, forms a complex with YoeB which inhibits its toxin activity.

Functionally, antitoxin component of a type II toxin-antitoxin (TA) system. A probable antitoxin for the putative mRNA interferase YeoB. In Streptomyces coelicolor (strain ATCC BAA-471 / A3(2) / M145), this protein is Antitoxin YefM.